The sequence spans 150 residues: Group IIC secretory phospholipase A2 (150 aa).

The N-terminal stretch at 1–20 (MKGIAIFLVFIFYWTTSTLS) is a signal peptide. 8 cysteine pairs are disulfide-bonded: Cys46-Cys143, Cys48-Cys64, Cys63-Cys121, Cys69-Cys150, Cys70-Cys114, Cys79-Cys107, Cys97-Cys112, and Cys99-Cys105. Residues Tyr47, Gly49, and Gly51 each coordinate Ca(2+). The active site involves His67. Position 68 (Asp68) interacts with Ca(2+). An N-linked (GlcNAc...) asparagine glycan is attached at Asn92. Asp115 is a catalytic residue.

This sequence belongs to the phospholipase A2 family. The cofactor is Ca(2+). Testis specific.

It localises to the secreted. The enzyme catalyses a 1,2-diacyl-sn-glycero-3-phosphocholine + H2O = a 1-acyl-sn-glycero-3-phosphocholine + a fatty acid + H(+). Its function is as follows. PA2 catalyzes the calcium-dependent hydrolysis of the 2-acyl groups in 3-sn-phosphoglycerides. Testis PA2 may be important in the production of prostaglandins, by the release of arachidonic acid, which in turn are necessary for the contractions of the seminiferous tubules and the testicular capsule; they also seem to decrease sperm transit time through the male reproductive tract. The protein is Group IIC secretory phospholipase A2 (Pla2g2c) of Mus musculus (Mouse).